Here is a 264-residue protein sequence, read N- to C-terminus: Teichoic acids export ATP-binding protein TagH (264 aa).

The 222-residue stretch at 22–243 (ERLKDVIVPF…YEKFLNDFKK (222 aa)) folds into the ABC transporter domain. 57–64 (GINGSGKS) contributes to the ATP binding site.

This sequence belongs to the ABC transporter superfamily. Teichoic acids exporter (TC 3.A.1.104.1) family. In terms of assembly, the complex is composed of two ATP-binding proteins (TagH) and two transmembrane proteins (TagG).

Its subcellular location is the cell membrane. It catalyses the reaction ATP + H2O + teichoic acidSide 1 = ADP + phosphate + teichoic acidSide 2.. Functionally, part of the ABC transporter complex TagGH involved in teichoic acids export. Responsible for energy coupling to the transport system. This is Teichoic acids export ATP-binding protein TagH from Staphylococcus saprophyticus subsp. saprophyticus (strain ATCC 15305 / DSM 20229 / NCIMB 8711 / NCTC 7292 / S-41).